The chain runs to 386 residues: SET and MYND domain-containing protein DDB_G0273589 (386 aa).

The 289-residue stretch at Asn-6–Ile-294 folds into the SET domain. An MYND-type zinc finger spans residues Cys-51 to Cys-94. Residues Asn-136–Gln-171 adopt a coiled-coil conformation.

It belongs to the class V-like SAM-binding methyltransferase superfamily.

Functionally, probable methyltransferase. The protein is SET and MYND domain-containing protein DDB_G0273589 of Dictyostelium discoideum (Social amoeba).